Here is a 196-residue protein sequence, read N- to C-terminus: Mitochondrial inner membrane protein SHH3 (196 aa).

Residues 1 to 53 (MKATIQRVTSVFGVPRASVFVPRISTPFILHNYISNGRMDLFSKEFHNGRVSK) constitute a mitochondrion transit peptide. The Mitochondrial matrix portion of the chain corresponds to 54–97 (SDLWSSNKEEELLVSQRKKRPISPHLTVYEPEMSWYLSSLHRIS). A ubiquinone contacts are provided by serine 91 and arginine 95. A helical membrane pass occupies residues 98–118 (GVLLALGFYAFTITLGVTTIM). Residues 119–137 (GMDTTFQDLNKWYHEKMPK) are Mitochondrial intermembrane-facing. The helical transmembrane segment at 138 to 160 (WSQWVAKGSAAYLFAFHFGNGIR) threads the bilayer. Histidine 154 provides a ligand contact to heme. At 161–174 (HLIWDMGYELTNRG) the chain is on the mitochondrial matrix side. The chain crosses the membrane as a helical span at residues 175-195 (VIKTGSIVLAGTLVLGTYLLA). Position 196 (glutamine 196) is a topological domain, mitochondrial intermembrane.

It belongs to the cytochrome b560 family.

Its subcellular location is the mitochondrion inner membrane. In terms of biological role, homolog of SDH3, but seems not to be a stoichiometric subunit of either the succinate dehydrogenase (SDH) complex or the mitochondrial inner membrane translocase TIM22 complex. This Saccharomyces cerevisiae (strain ATCC 204508 / S288c) (Baker's yeast) protein is Mitochondrial inner membrane protein SHH3.